The sequence spans 122 residues: Large ribosomal subunit protein uL14c (122 aa).

The protein belongs to the universal ribosomal protein uL14 family. As to quaternary structure, part of the 50S ribosomal subunit.

The protein resides in the plastid. It localises to the chloroplast. Its function is as follows. Binds to 23S rRNA. The polypeptide is Large ribosomal subunit protein uL14c (Psilotum nudum (Whisk fern)).